Reading from the N-terminus, the 517-residue chain is Ubiquitin carboxyl-terminal hydrolase 30 (517 aa).

Residues 1-35 are Mitochondrial intermembrane-facing; the sequence is MLSSRAQAARTAADKALQRFLRTGAAVRYKVMKNW. Residues 36-56 form a helical membrane-spanning segment; the sequence is GVIGGIAAALAAGIYVIWGPI. Residues 57-517 are Cytoplasmic-facing; it reads TERKKRRKGL…QQGREYRSEE (461 aa). The 435-residue stretch at 68-502 folds into the USP domain; the sequence is PGLVNLGNTC…SAYLLFYERV (435 aa). Cys-77 acts as the Nucleophile in catalysis. Glycyl lysine isopeptide (Lys-Gly) (interchain with G-Cter in ubiquitin) cross-links involve residues Lys-235 and Lys-289. Residues 364-395 are disordered; that stretch reads SQHGPKATESPGSALGVQDTQAAPKPGLSQPA. Residue His-452 is the Proton acceptor of the active site.

It belongs to the peptidase C19 family. Ubiquitinated by parkin (PRKN) at Lys-235 and Lys-289, leading to its degradation.

The protein localises to the mitochondrion outer membrane. It catalyses the reaction Thiol-dependent hydrolysis of ester, thioester, amide, peptide and isopeptide bonds formed by the C-terminal Gly of ubiquitin (a 76-residue protein attached to proteins as an intracellular targeting signal).. Inhibited by the diterpenoid derivative 15-oxospiramilactone (S3). Deubiquitinating enzyme tethered to the mitochondrial outer membrane that acts as a key inhibitor of mitophagy by counteracting the action of parkin (PRKN): hydrolyzes ubiquitin attached by parkin on target proteins, such as RHOT1/MIRO1 and TOMM20, thereby blocking parkin's ability to drive mitophagy. Preferentially cleaves 'Lys-6'- and 'Lys-11'-linked polyubiquitin chains, 2 types of linkage that participate in mitophagic signaling. Does not cleave efficiently polyubiquitin phosphorylated at 'Ser-65'. Acts as a negative regulator of mitochondrial fusion by mediating deubiquitination of MFN1 and MFN2. The polypeptide is Ubiquitin carboxyl-terminal hydrolase 30 (Usp30) (Rattus norvegicus (Rat)).